Reading from the N-terminus, the 918-residue chain is Eukaryotic translation initiation factor 3 subunit C (918 aa).

The interval 1–174 (MSRFFKGGSS…EEEGRRVVKS (174 aa)) is disordered. 5 positions are modified to phosphoserine: Ser10, Ser12, Ser16, Ser19, and Ser20. Composition is skewed to acidic residues over residues 36-47 (SSSEEESSEEES), 54-67 (ESSEEESESEESEV), and 79-128 (EDSE…ESDE). Phosphothreonine is present on Thr667. The 176-residue stretch at 681 to 856 (FHMHINLELL…GAIIFERVEI (176 aa)) folds into the PCI domain. Residues 879–918 (KLYEQKTQHTNPQENRRRDKGGSVKRRNERTENRNRSDMN) form a disordered region. A compositionally biased stretch (basic and acidic residues) spans 907–918 (ERTENRNRSDMN).

It belongs to the eIF-3 subunit C family. Component of the eukaryotic translation initiation factor 3 (eIF-3) complex. The eIF-3 complex appears to include tif32/eif3a, SPAC25G10.08/eif3b, tif33/eif3c, SPBC4C3.07/eif3f, tif35/eif3g and sum1/eif3i. This set of common subunits may also associate exclusively with either moe1/eif3d and int6/eif3e, or with SPAC821.05/eif3h and SPAC1751.03/eif3m. The eIF-3 complex may also include SPAC3A12.13c/eif3j.

It localises to the cytoplasm. Its function is as follows. Component of the eukaryotic translation initiation factor 3 (eIF-3) complex, which is involved in protein synthesis of a specialized repertoire of mRNAs and, together with other initiation factors, stimulates binding of mRNA and methionyl-tRNAi to the 40S ribosome. The eIF-3 complex specifically targets and initiates translation of a subset of mRNAs involved in cell proliferation. This Schizosaccharomyces pombe (strain 972 / ATCC 24843) (Fission yeast) protein is Eukaryotic translation initiation factor 3 subunit C (nip1).